We begin with the raw amino-acid sequence, 1206 residues long: STE20-like serine/threonine-protein kinase (1206 aa).

At serine 14 the chain carries Phosphoserine. A Protein kinase domain is found at 34 to 292 (WEIIGELGDG…TSQLLQHPFV (259 aa)). ATP-binding positions include 40–48 (LGDGAFGKV) and lysine 63. The active-site Proton acceptor is the aspartate 155. Threonine 183 carries the phosphothreonine modification. At serine 189 the chain carries Phosphoserine. A disordered region spans residues 308 to 352 (KAEVTEEVEDGKEEDDDDETESALPIPANKRASSDLSIASSEEDK). Acidic residues predominate over residues 312 to 328 (TEEVEDGKEEDDDDETE). A phosphoserine mark is found at serine 340, serine 341, serine 344, serine 347, serine 348, serine 354, and serine 372. The disordered stretch occupies residues 364 to 440 (SERTEHNTSG…ESQPDTEDQQ (77 aa)). 2 stretches are compositionally biased toward basic and acidic residues: residues 381–395 (LSEK…KTVD) and 420–429 (ENGREKKRPQ). Residues 468–492 (EEDRNEENQEIIENKLTQSEEIKDI) are a coiled coil. Disordered regions lie at residues 515 to 761 (DNEV…SSSD) and 773 to 792 (TKDS…KTLK). Over residues 520 to 536 (FTKEETQEKLGKDDKTH) the composition is skewed to basic and acidic residues. Phosphoserine is present on residues serine 545 and serine 563. Residues 556 to 565 (TQKSAEQSQD) show a composition bias toward polar residues. The span at 584-609 (KATEGPEAHGAEEEPRSGERVEDKQL) shows a compositional bias: basic and acidic residues. Over residues 634 to 643 (EEPETDEVDQ) the composition is skewed to acidic residues. Phosphoserine is present on residues serine 645, serine 649, and serine 668. Low complexity predominate over residues 691–702 (AEPQAPAASQAS). The segment covering 747-757 (TDSGTGSTVEN) has biased composition (polar residues). Serine 776 and serine 778 each carry phosphoserine. Threonine 813 is subject to Phosphothreonine. At serine 817 the chain carries Phosphoserine. Residues 825–1037 (LRRQELRELR…LKNRQTQERA (213 aa)) are a coiled coil. The UVR domain occupies 874–909 (DQEIENLEKQQKQTIERLEQEHTNRLRDEAKRIKGE). A Phosphothreonine modification is found at threonine 1065. A coiled-coil region spans residues 1077–1151 (AAQEEKRQKN…ELKEWREKLR (75 aa)). Over residues 1079–1099 (QEEKRQKNERMAQHQKHESQM) the composition is skewed to basic and acidic residues. Disordered regions lie at residues 1079 to 1100 (QEEK…SQMR) and 1181 to 1206 (LNPS…AWAG). The segment covering 1181–1200 (LNPSAQSRGCLQTSHPSSTR) has biased composition (polar residues).

It belongs to the protein kinase superfamily. STE Ser/Thr protein kinase family. STE20 subfamily. In terms of processing, proteolytically cleaved by caspase-3. Post-translationally, autophosphorylated.

The protein localises to the cytoplasm. It catalyses the reaction L-seryl-[protein] + ATP = O-phospho-L-seryl-[protein] + ADP + H(+). It carries out the reaction L-threonyl-[protein] + ATP = O-phospho-L-threonyl-[protein] + ADP + H(+). In terms of biological role, mediates apoptosis and actin stress fiber dissolution. This chain is STE20-like serine/threonine-protein kinase (Slk), found in Rattus norvegicus (Rat).